Reading from the N-terminus, the 225-residue chain is uncharacterized protein (225 aa).

4 helical membrane passes run 40–60 (LISLAAVFFCHSGMEALLSIV), 63–83 (LAFFHAGTALSSLLASLPFSF), 151–171 (LSETNLSIVFCILTTSSLTIL), and 176–196 (IFSLLLVVCTSACFSSAIVSL).

It localises to the membrane. This is an uncharacterized protein from Saccharomyces cerevisiae (strain ATCC 204508 / S288c) (Baker's yeast).